Reading from the N-terminus, the 329-residue chain is Methionyl-tRNA formyltransferase (329 aa).

112 to 115 lines the (6S)-5,6,7,8-tetrahydrofolate pocket; the sequence is SILP.

Belongs to the Fmt family.

The catalysed reaction is L-methionyl-tRNA(fMet) + (6R)-10-formyltetrahydrofolate = N-formyl-L-methionyl-tRNA(fMet) + (6S)-5,6,7,8-tetrahydrofolate + H(+). Functionally, attaches a formyl group to the free amino group of methionyl-tRNA(fMet). The formyl group appears to play a dual role in the initiator identity of N-formylmethionyl-tRNA by promoting its recognition by IF2 and preventing the misappropriation of this tRNA by the elongation apparatus. The polypeptide is Methionyl-tRNA formyltransferase (Shewanella sediminis (strain HAW-EB3)).